The chain runs to 402 residues: Coiled-coil domain-containing protein 188 (402 aa).

Disordered regions lie at residues 1–30 (MEGLKTLGPCGHPHPQCPPTPASSSHGGGL), 50–74 (HSVQSQRPFPVPGAGGSGPTVEGEA), and 108–131 (HPGSNQGAPRQGGSIGSGTRPCPC). The stretch at 154 to 189 (GLLGSAEQSFLQLEQENHSLKRQNQELREQLGALLG) forms a coiled coil. The chain crosses the membrane as a helical span at residues 347 to 363 (LLLGALLVWTAAYVYVV).

The protein resides in the membrane. This chain is Coiled-coil domain-containing protein 188, found in Homo sapiens (Human).